A 98-amino-acid polypeptide reads, in one-letter code: NADH-ubiquinone oxidoreductase chain 4L (98 aa).

Helical transmembrane passes span 2-22, 29-49, and 61-81; these read PSIS…MLMF, SLLC…LTIL, and ILLL…LVMV.

It belongs to the complex I subunit 4L family. In terms of assembly, core subunit of respiratory chain NADH dehydrogenase (Complex I) which is composed of 45 different subunits.

The protein resides in the mitochondrion inner membrane. The catalysed reaction is a ubiquinone + NADH + 5 H(+)(in) = a ubiquinol + NAD(+) + 4 H(+)(out). Its function is as follows. Core subunit of the mitochondrial membrane respiratory chain NADH dehydrogenase (Complex I) which catalyzes electron transfer from NADH through the respiratory chain, using ubiquinone as an electron acceptor. Part of the enzyme membrane arm which is embedded in the lipid bilayer and involved in proton translocation. In Microcebus simmonsi (Simmons's mouse lemur), this protein is NADH-ubiquinone oxidoreductase chain 4L (MT-ND4L).